The primary structure comprises 339 residues: uncharacterized protein (339 aa).

VOC domains follow at residues 2 to 127 (EFDY…VRSE) and 141 to 276 (TIDH…CLEI). Residues H144, H222, and E306 each contribute to the Fe cation site.

Belongs to the 4HPPD family. Fe cation is required as a cofactor.

This is an uncharacterized protein from Synechocystis sp. (strain ATCC 27184 / PCC 6803 / Kazusa).